The chain runs to 225 residues: NAD(P)H-quinone oxidoreductase subunit K, chloroplastic (225 aa).

[4Fe-4S] cluster is bound by residues cysteine 43, cysteine 44, cysteine 108, and cysteine 139.

It belongs to the complex I 20 kDa subunit family. In terms of assembly, NDH is composed of at least 16 different subunits, 5 of which are encoded in the nucleus. [4Fe-4S] cluster serves as cofactor.

Its subcellular location is the plastid. It is found in the chloroplast thylakoid membrane. It carries out the reaction a plastoquinone + NADH + (n+1) H(+)(in) = a plastoquinol + NAD(+) + n H(+)(out). It catalyses the reaction a plastoquinone + NADPH + (n+1) H(+)(in) = a plastoquinol + NADP(+) + n H(+)(out). Functionally, NDH shuttles electrons from NAD(P)H:plastoquinone, via FMN and iron-sulfur (Fe-S) centers, to quinones in the photosynthetic chain and possibly in a chloroplast respiratory chain. The immediate electron acceptor for the enzyme in this species is believed to be plastoquinone. Couples the redox reaction to proton translocation, and thus conserves the redox energy in a proton gradient. This chain is NAD(P)H-quinone oxidoreductase subunit K, chloroplastic, found in Nuphar advena (Common spatterdock).